Reading from the N-terminus, the 207-residue chain is uncharacterized protein (207 aa).

Active-site residues include arginine 80, glutamate 88, and arginine 148.

The protein belongs to the thermonuclease family.

This is an uncharacterized protein from Methanocaldococcus jannaschii (strain ATCC 43067 / DSM 2661 / JAL-1 / JCM 10045 / NBRC 100440) (Methanococcus jannaschii).